Reading from the N-terminus, the 394-residue chain is tRNA-specific 2-thiouridylase MnmA (394 aa).

Residues 30 to 37 (AMSGGVDS) and leucine 56 each bind ATP. The active-site Nucleophile is cysteine 124. A disulfide bridge links cysteine 124 with cysteine 220. Glycine 148 serves as a coordination point for ATP. The interaction with tRNA stretch occupies residues 170–172 (RDQ). Cysteine 220 (cysteine persulfide intermediate) is an active-site residue.

It belongs to the MnmA/TRMU family.

Its subcellular location is the cytoplasm. The enzyme catalyses S-sulfanyl-L-cysteinyl-[protein] + uridine(34) in tRNA + AH2 + ATP = 2-thiouridine(34) in tRNA + L-cysteinyl-[protein] + A + AMP + diphosphate + H(+). Its function is as follows. Catalyzes the 2-thiolation of uridine at the wobble position (U34) of tRNA, leading to the formation of s(2)U34. The protein is tRNA-specific 2-thiouridylase MnmA of Hyphomonas neptunium (strain ATCC 15444).